The chain runs to 732 residues: Cullin-3A (732 aa).

Residues 662-724 form the Cullin neddylation domain; the sequence is DRKPQIEAAI…RDFLERDSTD (63 aa). Lys676 is covalently cross-linked (Glycyl lysine isopeptide (Lys-Gly) (interchain with G-Cter in NEDD8)).

Belongs to the cullin family. Interacts with CSN2 and RBX1A. Interacts with BTB/POZ domain-containing proteins BPM1, BPM2, BPM3, BPM6, BT1, BT2, BT3, BT5, AT1G01640, AT1G21780 and AT5G48510. Interacts with SR1IP1. Interacts with NPR3 and NPR4. Binds to NPR1; this interaction requires NPR3 and NPR4. Neddylated. Deneddylated via its interaction with the COP9 signalosome (CSN) complex.

Functionally, component of the cullin-RING ubiquitin ligases (CRL), or CUL3-RBX1-BTB protein E3 ligase complexes which mediate the ubiquitination and subsequent proteasomal degradation of target proteins. The functional specificity of the CRL complex depends on the BTB domain-containing protein as the substrate recognition component. Involved in embryo pattern formation and endosperm development. Required for the normal division and organization of the root stem cells and columella root cap cells. Regulates primary root growth by an unknown pathway, but in an ethylene-dependent manner. Functions in distal root patterning, by an ethylene-independent mechanism. Functionally redundant with CUL3B. This chain is Cullin-3A, found in Arabidopsis thaliana (Mouse-ear cress).